The sequence spans 773 residues: Transducin-like enhancer protein 4 (773 aa).

Disordered stretches follow at residues 1–22 (MIRD…QPAQ), 140–162 (HGHG…AIPP), and 182–360 (LPIK…ASSL). Residues 1–136 (MIRDLSKMYP…AIIGQQLQAQ (136 aa)) are q domain. The GP domain stretch occupies residues 137-204 (HLSHGHGLPV…HQRDRDSIKS (68 aa)). The segment covering 183–202 (PIKDEKKHHDNDHQRDRDSI) has biased composition (basic and acidic residues). A compositionally biased stretch (low complexity) spans 203-212 (KSSSVSPSAS). The interval 205–274 (SSVSPSASFR…SPRGSPAHSP (70 aa)) is ccN domain. Phosphoserine is present on residues Ser-208, Ser-212, and Ser-222. Over residues 215–252 (GAEKHRNSADYSSESKKQKTEEKEIAARYDSDGEKSDD) the composition is skewed to basic and acidic residues. An N6-acetyllysine modification is found at Lys-237. A phosphoserine mark is found at Ser-245, Ser-250, Ser-269, and Ser-273. A compositionally biased stretch (basic and acidic residues) spans 273-289 (SPRENGLDKTRLLKKDA). The interval 275 to 452 (RENGLDKTRL…PGGKPAYSFH (178 aa)) is SP domain. An N6-acetyllysine modification is found at Lys-281. Low complexity predominate over residues 290-305 (PISPASIASSSSTPSS). Position 292 is a phosphoserine (Ser-292). Over residues 317–328 (TTPVSKSNTPTP) the composition is skewed to polar residues. Thr-318 carries the phosphothreonine modification. 2 positions are modified to phosphoserine: Ser-321 and Ser-323. Residues Thr-325, Thr-327, Thr-334, and Thr-340 each carry the phosphothreonine modification. The residue at position 419 (Ser-419) is a Phosphoserine. WD repeat units lie at residues 485 to 523 (NHGE…NKSP), 531 to 570 (NRDN…PRIK), 575 to 614 (SSAP…LVRQ), 617 to 656 (GHTD…QLQQ), 658 to 697 (DFTS…KYQL), 699 to 738 (LHES…SIFQ), and 740 to 773 (KESS…EVIY).

Belongs to the WD repeat Groucho/TLE family. In terms of assembly, homooligomer and heterooligomer with other family members. Interacts with PAX5. Interacts with LEF1, TCF7, TCF7L1 and TCF7L2. Interacts with ZNF703; TLE4 may mediate ZNF703 transcriptional repression. Interacts with SIX3 and SIX6. Interacts with PAX2. Interacts with TLE1. Phosphorylated. PAX5 binding increases phosphorylation. Post-translationally, ubiquitinated by XIAP/BIRC4. As to expression, in all tissues examined, mostly in brain, and muscle.

It is found in the nucleus. Its function is as follows. Transcriptional corepressor that binds to a number of transcription factors. Inhibits the transcriptional activation mediated by PAX5, and by CTNNB1 and TCF family members in Wnt signaling. The effects of full-length TLE family members may be modulated by association with dominant-negative AES. Essential for the transcriptional repressor activity of SIX3 during retina and lens development and for SIX3 transcriptional auto-repression. Involved in transcriptional repression of GNRHR and enhances MSX1-mediated transcriptional repression of CGA/alpha-GSU. The chain is Transducin-like enhancer protein 4 (TLE4) from Homo sapiens (Human).